Here is a 179-residue protein sequence, read N- to C-terminus: UPF0316 protein Ping_1367 (179 aa).

The next 2 membrane-spanning stretches (helical) occupy residues Phe-28–Val-48 and Trp-55–Ile-75.

This sequence belongs to the UPF0316 family.

The protein localises to the cell membrane. In Psychromonas ingrahamii (strain DSM 17664 / CCUG 51855 / 37), this protein is UPF0316 protein Ping_1367.